We begin with the raw amino-acid sequence, 136 residues long: Small ribosomal subunit protein uS9 (136 aa).

The tract at residues 97-136 is disordered; it reads SPDNRKPLKTEGHLSRDPRAKERRKYGLKKARKAPQFSKR. Basic and acidic residues predominate over residues 98–116; it reads PDNRKPLKTEGHLSRDPRA. A compositionally biased stretch (basic residues) spans 117–136; that stretch reads KERRKYGLKKARKAPQFSKR.

It belongs to the universal ribosomal protein uS9 family.

This is Small ribosomal subunit protein uS9 from Prochlorococcus marinus (strain MIT 9312).